Here is a 136-residue protein sequence, read N- to C-terminus: Probable disulfide formation protein (136 aa).

The helical transmembrane segment at 7-26 threads the bilayer; that stretch reads SYALYFAWAISCAGTLISIF. Residues cysteine 36 and cysteine 39 are joined by a disulfide bond. The next 2 helical transmembrane spans lie at 41–60 and 67–84; these read YQRI…AYRE and YILP…YQVF. A disulfide bond links cysteine 96 and cysteine 101. A helical membrane pass occupies residues 109–131; the sequence is SYVTIPMASVVAFGAIVCLLVLT.

It belongs to the DsbB family. BdbC subfamily.

It localises to the cell inner membrane. Functionally, required for disulfide bond formation in some proteins. The sequence is that of Probable disulfide formation protein from Chlamydia pneumoniae (Chlamydophila pneumoniae).